A 239-amino-acid polypeptide reads, in one-letter code: Acyl-protein thioesterase 1 (239 aa).

Catalysis depends on charge relay system residues Ser-124, Asp-180, and His-213.

It belongs to the AB hydrolase superfamily. AB hydrolase 2 family.

Its subcellular location is the cytoplasm. It is found in the nucleus. It carries out the reaction S-hexadecanoyl-L-cysteinyl-[protein] + H2O = L-cysteinyl-[protein] + hexadecanoate + H(+). Hydrolyzes fatty acids from S-acylated cysteine residues in proteins with a strong preference for palmitoylated G-alpha proteins over other acyl substrates. Mediates the deacylation of G-alpha proteins such as GPA1 in vivo, but has weak or no activity toward palmitoylated Ras proteins. Has weak lysophospholipase activity in vitro; however such activity may not exist in vivo. This Emericella nidulans (strain FGSC A4 / ATCC 38163 / CBS 112.46 / NRRL 194 / M139) (Aspergillus nidulans) protein is Acyl-protein thioesterase 1.